An 876-amino-acid polypeptide reads, in one-letter code: Alanine--tRNA ligase (876 aa).

The Zn(2+) site is built by His565, His569, Cys667, and His671.

It belongs to the class-II aminoacyl-tRNA synthetase family. The cofactor is Zn(2+).

The protein localises to the cytoplasm. The enzyme catalyses tRNA(Ala) + L-alanine + ATP = L-alanyl-tRNA(Ala) + AMP + diphosphate. In terms of biological role, catalyzes the attachment of alanine to tRNA(Ala) in a two-step reaction: alanine is first activated by ATP to form Ala-AMP and then transferred to the acceptor end of tRNA(Ala). Also edits incorrectly charged Ser-tRNA(Ala) and Gly-tRNA(Ala) via its editing domain. The polypeptide is Alanine--tRNA ligase (Staphylococcus aureus (strain MRSA252)).